The primary structure comprises 150 residues: Small ribosomal subunit protein bS6 (150 aa).

The segment at 99–150 is disordered; the sequence is GPSAMLQKRDRDDRGERGERGFGGGGFGGGRDREDRPRRGRDREEAATEETF. Composition is skewed to basic and acidic residues over residues 105 to 118 and 128 to 144; these read QKRD…RGER and GRDR…REEA.

The protein belongs to the bacterial ribosomal protein bS6 family.

Its function is as follows. Binds together with bS18 to 16S ribosomal RNA. This Azorhizobium caulinodans (strain ATCC 43989 / DSM 5975 / JCM 20966 / LMG 6465 / NBRC 14845 / NCIMB 13405 / ORS 571) protein is Small ribosomal subunit protein bS6.